The chain runs to 414 residues: TAR DNA-binding protein 43 (414 aa).

Glycyl lysine isopeptide (Lys-Gly) (interchain with G-Cter in SUMO2) cross-links involve residues K79, K84, K95, K102, and K181. Positions 82–98 match the Nuclear localization signal motif; that stretch reads KRKMDETDASSAVKVKR. RRM domains lie at 104 to 200 and 191 to 262; these read SDLI…RCTE and RKVF…NAEP. Residue S183 is modified to Phosphoserine. An interaction with UBQLN2 region spans residues 216-414; the sequence is DVMDVFIPKP…MDSKSSGWGM (199 aa). A Nuclear export signal motif is present at residues 239-250; the sequence is IAQSLCGEDLII. A compositionally biased stretch (basic and acidic residues) spans 261–274; that stretch reads EPKHNSNRQLERSG. 2 disordered regions span residues 261–303 and 341–373; these read EPKH…GNNQ and ASQQNQSGPSGNNQNQGNMQREPNQAFGSGNNS. K263 participates in a covalent cross-link: Glycyl lysine isopeptide (Lys-Gly) (interchain with G-Cter in SUMO2). The span at 275 to 303 shows a compositional bias: gly residues; sequence RFGGNPGGFGNQGGFGNSRGGGAGLGNNQ. S292 is modified (phosphoserine). The residue at position 293 (R293) is an Omega-N-methylarginine. Over residues 342–358 the composition is skewed to low complexity; sequence SQQNQSGPSGNNQNQGN.

As to quaternary structure, homodimer. Homooligomer (via its N-terminal domain). Interacts with BRDT. Binds specifically to pyrimidine-rich motifs of TAR DNA and to single stranded TG repeated sequences. Binds to RNA, specifically to UG repeated sequences with a minimum of six contiguous repeats. Interacts with ATXN2; the interaction is RNA-dependent. Interacts with MATR3. Interacts with UBQLN2. Interacts with HNRNPA2B1. Interacts with ZNF106. Interacts with CNOT7/CAF1. Interacts with CRY2. Interacts with PPIA/CYPA; the interaction is dependent on RNA-binding activity of TARDBP and PPIase activity of PPIA/CYPA and acetylation of PPIA/CYPA at 'Lys-125' favors the interaction. In terms of processing, hyperphosphorylated in hippocampus, neocortex, and spinal cord from individuals affected with ALS and FTLDU. Phosphorylated upon cellular stress. Ubiquitinated in hippocampus, neocortex, and spinal cord from individuals affected with ALS and FTLDU. Post-translationally, cleaved to generate C-terminal fragments in hippocampus, neocortex, and spinal cord from individuals affected with ALS and FTLDU. As to expression, ubiquitously expressed. In particular, expression is high in pancreas, placenta, lung, genital tract and spleen.

Its subcellular location is the nucleus. The protein resides in the cytoplasm. It localises to the stress granule. It is found in the mitochondrion. Functionally, RNA-binding protein that is involved in various steps of RNA biogenesis and processing. Preferentially binds, via its two RNA recognition motifs RRM1 and RRM2, to GU-repeats on RNA molecules predominantly localized within long introns and in the 3'UTR of mRNAs. In turn, regulates the splicing of many non-coding and protein-coding RNAs including proteins involved in neuronal survival, as well as mRNAs that encode proteins relevant for neurodegenerative diseases. Plays a role in maintaining mitochondrial homeostasis by regulating the processing of mitochondrial transcripts. Also regulates mRNA stability by recruiting CNOT7/CAF1 deadenylase on mRNA 3'UTR leading to poly(A) tail deadenylation and thus shortening. In response to oxidative insult, associates with stalled ribosomes localized to stress granules (SGs) and contributes to cell survival. Also participates in the normal skeletal muscle formation and regeneration, forming cytoplasmic myo-granules and binding mRNAs that encode sarcomeric proteins. Plays a role in the maintenance of the circadian clock periodicity via stabilization of the CRY1 and CRY2 proteins in a FBXL3-dependent manner. Negatively regulates the expression of CDK6. Regulates the expression of HDAC6, ATG7 and VCP in a PPIA/CYPA-dependent manner. In Homo sapiens (Human), this protein is TAR DNA-binding protein 43.